Here is a 276-residue protein sequence, read N- to C-terminus: Probable endonuclease 4 (276 aa).

Zn(2+)-binding residues include H70, H108, E143, D176, H179, H210, D223, H225, and E255.

The protein belongs to the AP endonuclease 2 family. Zn(2+) serves as cofactor.

The catalysed reaction is Endonucleolytic cleavage to 5'-phosphooligonucleotide end-products.. Its function is as follows. Endonuclease IV plays a role in DNA repair. It cleaves phosphodiester bonds at apurinic or apyrimidinic (AP) sites, generating a 3'-hydroxyl group and a 5'-terminal sugar phosphate. This chain is Probable endonuclease 4, found in Mesomycoplasma hyopneumoniae (strain J / ATCC 25934 / NCTC 10110) (Mycoplasma hyopneumoniae).